The chain runs to 86 residues: Large ribosomal subunit protein bL27 (86 aa).

Positions 1 to 22 are disordered; sequence MATKKAGGSSRNGRDSAGRRLG.

This sequence belongs to the bacterial ribosomal protein bL27 family.

This chain is Large ribosomal subunit protein bL27, found in Rickettsia rickettsii (strain Iowa).